Consider the following 98-residue polypeptide: Co-chaperonin GroES 1 (98 aa).

Belongs to the GroES chaperonin family. In terms of assembly, heptamer of 7 subunits arranged in a ring. Interacts with the chaperonin GroEL.

Its subcellular location is the cytoplasm. Together with the chaperonin GroEL, plays an essential role in assisting protein folding. The GroEL-GroES system forms a nano-cage that allows encapsulation of the non-native substrate proteins and provides a physical environment optimized to promote and accelerate protein folding. GroES binds to the apical surface of the GroEL ring, thereby capping the opening of the GroEL channel. The polypeptide is Co-chaperonin GroES 1 (Rhodopseudomonas palustris (strain ATCC BAA-98 / CGA009)).